We begin with the raw amino-acid sequence, 792 residues long: Cullin-4 (792 aa).

Positions 1 to 10 are enriched in polar residues; it reads MSLPTKRSTF. The tract at residues 1–43 is disordered; that stretch reads MSLPTKRSTFSAASASDDSSYSSPPMKKAKNDLHHSPQHPNTA. Positions 11–23 are enriched in low complexity; sequence SAASASDDSSYSS. A Cullin neddylation domain is found at 724–784; that stretch reads DRQYQIDAAI…REYLEREKSN (61 aa). A Glycyl lysine isopeptide (Lys-Gly) (interchain with G-Cter in NEDD8) cross-link involves residue lysine 738.

Belongs to the cullin family. In terms of assembly, interacts with COP10, CSN3, CSN4, CSN5, CSN8, DDB1A, DDB1B, DDB2, DET1 and RBX1. Neddylated (rubylated). Deneddylated via its interaction with the COP9 signalosome (CSN) complex. Ubiquitous.

The protein resides in the nucleus. It functions in the pathway protein modification; protein ubiquitination. In terms of biological role, component of the CUL4-RBX1-CDD (COP10-DDB1a-DET1) E3 ubiquitin-protein ligase complex which mediates the ubiquitination and subsequent proteasomal degradation of target proteins. Participates in the CDD complex to light-mediated control of development. May repress photomorphogenesis through enhancing COP1 E3 ubiquitin-protein ligase activity. Acts together with the CUL4-DDB1-COP1-SPA E3 ubiquitin-protein ligase complexes in the repression of photomorphogenesis and flowering time. Component ot the CUL4-RBX1-DDB1-PRL1 E3 ubiquitin-protein ligase complex which mediates ubiquitination and subsequent degradation of AKIN10. Component of the CUL4-RBX1-DDB1-DWA1/DWA2 E3 ubiquitin-protein ligase complex that acts as a negative regulator in abscisic acid (ABA) signaling and may target ABI5 for degradation. This chain is Cullin-4 (CUL4), found in Arabidopsis thaliana (Mouse-ear cress).